Consider the following 204-residue polypeptide: uncharacterized protein (204 aa).

The protein resides in the cytoplasm. It localises to the nucleus. This is an uncharacterized protein from Schizosaccharomyces pombe (strain 972 / ATCC 24843) (Fission yeast).